The chain runs to 267 residues: Small ribosomal subunit protein uS10m (267 aa).

A mitochondrion-targeting transit peptide spans 1 to 10; the sequence is MLSRILGVRN.

Belongs to the universal ribosomal protein uS10 family. As to quaternary structure, part of the mitochondrial small ribosomal subunit.

It is found in the mitochondrion. Involved in mitochondrial genome encoded proteins translation. Involved in the binding of tRNA to the ribosomes. This chain is Small ribosomal subunit protein uS10m (RSM10), found in Debaryomyces hansenii (strain ATCC 36239 / CBS 767 / BCRC 21394 / JCM 1990 / NBRC 0083 / IGC 2968) (Yeast).